We begin with the raw amino-acid sequence, 270 residues long: uncharacterized protein (270 aa).

The first 22 residues, 1–22 (MEYIKKIALYMSVLLLIIFIGG), serve as a signal peptide directing secretion. Residue Cys23 is the site of N-palmitoyl cysteine attachment. A lipid anchor (S-diacylglycerol cysteine) is attached at Cys23.

It belongs to the staphylococcal tandem lipoprotein family.

It localises to the cell membrane. This is an uncharacterized protein from Staphylococcus aureus (strain NCTC 8325 / PS 47).